A 429-amino-acid polypeptide reads, in one-letter code: Glutamate-1-semialdehyde 2,1-aminomutase 1 (429 aa).

N6-(pyridoxal phosphate)lysine is present on Lys268.

The protein belongs to the class-III pyridoxal-phosphate-dependent aminotransferase family. HemL subfamily. In terms of assembly, homodimer. The cofactor is pyridoxal 5'-phosphate.

The protein localises to the cytoplasm. The enzyme catalyses (S)-4-amino-5-oxopentanoate = 5-aminolevulinate. It functions in the pathway porphyrin-containing compound metabolism; protoporphyrin-IX biosynthesis; 5-aminolevulinate from L-glutamyl-tRNA(Glu): step 2/2. In Listeria monocytogenes serotype 4b (strain F2365), this protein is Glutamate-1-semialdehyde 2,1-aminomutase 1.